The following is a 78-amino-acid chain: Translation initiation factor IF-1, chloroplastic (78 aa).

The S1-like domain maps to Met-1–Arg-72.

It belongs to the IF-1 family. In terms of assembly, component of the 30S ribosomal translation pre-initiation complex which assembles on the 30S ribosome in the order IF-2 and IF-3, IF-1 and N-formylmethionyl-tRNA(fMet); mRNA recruitment can occur at any time during PIC assembly.

It is found in the plastid. It localises to the chloroplast. Its function is as follows. One of the essential components for the initiation of protein synthesis. Stabilizes the binding of IF-2 and IF-3 on the 30S subunit to which N-formylmethionyl-tRNA(fMet) subsequently binds. Helps modulate mRNA selection, yielding the 30S pre-initiation complex (PIC). Upon addition of the 50S ribosomal subunit IF-1, IF-2 and IF-3 are released leaving the mature 70S translation initiation complex. This Chaetosphaeridium globosum (Charophycean green alga) protein is Translation initiation factor IF-1, chloroplastic.